We begin with the raw amino-acid sequence, 311 residues long: Porphobilinogen deaminase (311 aa).

The residue at position 245 (Cys245) is an S-(dipyrrolylmethanemethyl)cysteine.

This sequence belongs to the HMBS family. Monomer. Dipyrromethane serves as cofactor.

It carries out the reaction 4 porphobilinogen + H2O = hydroxymethylbilane + 4 NH4(+). It participates in porphyrin-containing compound metabolism; protoporphyrin-IX biosynthesis; coproporphyrinogen-III from 5-aminolevulinate: step 2/4. Its function is as follows. Tetrapolymerization of the monopyrrole PBG into the hydroxymethylbilane pre-uroporphyrinogen in several discrete steps. This Acinetobacter baylyi (strain ATCC 33305 / BD413 / ADP1) protein is Porphobilinogen deaminase.